The primary structure comprises 279 residues: HTH-type transcriptional regulator HdfR (279 aa).

In terms of domain architecture, HTH lysR-type spans 1-58; that stretch reads MDTELLKTFLEVSRTRHFGRAAESLYLTQSAVSFRIRQLENQLGVNLFTRHRNNIRLT. Residues 18 to 37 constitute a DNA-binding region (H-T-H motif); that stretch reads FGRAAESLYLTQSAVSFRIR.

This sequence belongs to the LysR transcriptional regulatory family.

Negatively regulates the transcription of the flagellar master operon flhDC by binding to the upstream region of the operon. The sequence is that of HTH-type transcriptional regulator HdfR from Escherichia coli (strain ATCC 8739 / DSM 1576 / NBRC 3972 / NCIMB 8545 / WDCM 00012 / Crooks).